We begin with the raw amino-acid sequence, 203 residues long: MKLLNSLVLLAALCAITANGKIVEDTPDPSTVYNLFQLSSSDGGCDPAGTHSPDANVNVSVDKCRNVCNKNIKISKGTSTNQFTFQTYNDNSCSQATSDQALSFTCSDNVKKQLGTSIYSVICSTGSDSTNPTSTPSTTPSATPTVTPSTTPTVTPTVTPSTTPTVAPTVPPTTPPSTTTGSGSTVVASFGLIVSILLASLAL.

The signal sequence occupies residues 1 to 20; the sequence is MKLLNSLVLLAALCAITANG. N-linked (GlcNAc...) asparagine glycosylation occurs at asparagine 58. Residues 127 to 168 show a composition bias toward low complexity; that stretch reads SDSTNPTSTPSTTPSATPTVTPSTTPTVTPTVTPSTTPTVAP. Positions 127 to 183 are disordered; it reads SDSTNPTSTPSTTPSATPTVTPSTTPTVTPTVTPSTTPTVAPTVPPTTPPSTTTGSG. Residue serine 182 is the site of GPI-like-anchor amidated serine attachment. A propeptide spans 183–203 (removed in mature form); the sequence is GSTVVASFGLIVSILLASLAL.

The protein belongs to the ponticulin family. The GPI-like-anchor contains a phosphoceramide group, rather than a phosphatidyl group.

The protein localises to the cell membrane. Its function is as follows. Binds F-actin and nucleates actin assembly. This Dictyostelium discoideum (Social amoeba) protein is Ponticulin-like protein H (ponH).